Reading from the N-terminus, the 499-residue chain is ATP synthase subunit alpha (499 aa).

169 to 176 (GDRGTGKT) contacts ATP.

The protein belongs to the ATPase alpha/beta chains family. In terms of assembly, F-type ATPases have 2 components, CF(1) - the catalytic core - and CF(0) - the membrane proton channel. CF(1) has five subunits: alpha(3), beta(3), gamma(1), delta(1), epsilon(1). CF(0) has three main subunits: a(1), b(2) and c(9-12). The alpha and beta chains form an alternating ring which encloses part of the gamma chain. CF(1) is attached to CF(0) by a central stalk formed by the gamma and epsilon chains, while a peripheral stalk is formed by the delta and b chains.

It localises to the cell inner membrane. It carries out the reaction ATP + H2O + 4 H(+)(in) = ADP + phosphate + 5 H(+)(out). In terms of biological role, produces ATP from ADP in the presence of a proton gradient across the membrane. The alpha chain is a regulatory subunit. In Brachyspira hyodysenteriae (strain ATCC 49526 / WA1), this protein is ATP synthase subunit alpha.